The following is a 260-amino-acid chain: Serine hydroxymethyltransferase (260 aa).

N6-(pyridoxal phosphate)lysine is present on Lys-60.

This sequence belongs to the SHMT family. Homodimer. It depends on pyridoxal 5'-phosphate as a cofactor.

It localises to the cytoplasm. It catalyses the reaction (6R)-5,10-methylene-5,6,7,8-tetrahydrofolate + glycine + H2O = (6S)-5,6,7,8-tetrahydrofolate + L-serine. Its pathway is one-carbon metabolism; tetrahydrofolate interconversion. The protein operates within amino-acid biosynthesis; glycine biosynthesis; glycine from L-serine: step 1/1. In terms of biological role, catalyzes the reversible interconversion of serine and glycine with tetrahydrofolate (THF) serving as the one-carbon carrier. This reaction serves as the major source of one-carbon groups required for the biosynthesis of purines, thymidylate, methionine, and other important biomolecules. Also exhibits THF-independent aldolase activity toward beta-hydroxyamino acids, producing glycine and aldehydes, via a retro-aldol mechanism. In Corynebacterium sp. (strain P-1), this protein is Serine hydroxymethyltransferase.